Consider the following 111-residue polypeptide: Small ribosomal subunit protein mS38 (111 aa).

Residues 82-99 (RKRKKKMKKHKLRKRRKR) show a composition bias toward basic residues. Positions 82-111 (RKRKKKMKKHKLRKRRKREKAERRKLSQGR) are disordered. Residues 100-111 (EKAERRKLSQGR) are compositionally biased toward basic and acidic residues.

This sequence belongs to the mitochondrion-specific ribosomal protein mS38 family. As to quaternary structure, component of the mitochondrial small ribosomal subunit (mt-SSU). Mature yeast 74S mitochondrial ribosomes consist of a small (37S) and a large (54S) subunit. The 37S small subunit contains a 15S ribosomal RNA (15S mt-rRNA) and 34 different proteins. The 54S large subunit contains a 21S rRNA (21S mt-rRNA) and 46 different proteins.

It localises to the mitochondrion. The protein resides in the mitochondrion inner membrane. Its function is as follows. Component of the mitochondrial ribosome (mitoribosome), a dedicated translation machinery responsible for the synthesis of mitochondrial genome-encoded proteins, including at least some of the essential transmembrane subunits of the mitochondrial respiratory chain. The mitoribosomes are attached to the mitochondrial inner membrane and translation products are cotranslationally integrated into the membrane. mS38 is also involved in the splicing of the COX1 mRNA. The protein is Small ribosomal subunit protein mS38 (QRI5) of Saccharomyces cerevisiae (strain ATCC 204508 / S288c) (Baker's yeast).